A 991-amino-acid chain; its full sequence is Ribonuclease TUDOR 1 (991 aa).

Alanine 2 carries the N-acetylalanine modification. TNase-like domains are found at residues 8 to 151 (QWLK…RWSK), 186 to 364 (KPME…MWAN), 378 to 557 (QNFT…IHSA), and 587 to 714 (RRIP…IWEN). The interval 227-250 (RTTNGSVVETVPDEPNGDVSAESR) is disordered. One can recognise a Tudor domain in the interval 782 to 847 (NPKRGDIVLA…RPIDPSVSAA (66 aa)). A Phosphotyrosine modification is found at tyrosine 970. The interval 971 to 991 (GDIESDDEDTGPARKPAGGRR) is disordered. Serine 975 carries the phosphoserine modification. Position 980 is a phosphothreonine (threonine 980).

Expressed in seeds, leaves, flowers, roots and siliques (at protein level). Accumulates in the cap and elongation zone of the root apices (at protein level).

Its subcellular location is the cytoplasm. The protein resides in the cytoplasmic granule. It is found in the perinuclear region. It localises to the endoplasmic reticulum. Repressed by the specific inhibitor 3',5'-deoxythymidine bisphosphate (pdTp); this RNase activity inhibition impairs subcellular relocation upon abiotic stress and leads to reduced stress resistance. Functionally, cytoprotective ribonuclease (RNase) required for resistance to abiotic stresses, acting as a positive regulator of mRNA decapping during stress. Essential for the integrity and function of cytoplasmic messenger ribonucleoprotein (mRNP) complexes called stress granules (SGs) and processing bodies (PBs), sites of post-transcriptional gene regulation during stress (e.g. salt and heat). Involved in gibberellic acid (GA) biosynthesis. Essential for stress tolerance, probably by regulating mRNAs entering the secretory pathway. Component of stress granules (SGs) that regulates growth under salt stress by modulating levels of GA20OX3 mRNA. Binds GA20OX3 mRNA. May inhibit the degradation of mRNAs involved in stress adaptation. This is Ribonuclease TUDOR 1 from Arabidopsis thaliana (Mouse-ear cress).